Consider the following 247-residue polypeptide: UDP-2,3-diacylglucosamine hydrolase (247 aa).

Mn(2+) contacts are provided by D8, H10, D41, N79, and H114. 79–80 (NR) is a substrate binding site. The substrate site is built by D122, S160, D171, Q174, and H202. 2 residues coordinate Mn(2+): H202 and H204.

This sequence belongs to the LpxH family. Requires Mn(2+) as cofactor.

The protein localises to the cell inner membrane. The enzyme catalyses UDP-2-N,3-O-bis[(3R)-3-hydroxytetradecanoyl]-alpha-D-glucosamine + H2O = 2-N,3-O-bis[(3R)-3-hydroxytetradecanoyl]-alpha-D-glucosaminyl 1-phosphate + UMP + 2 H(+). It functions in the pathway glycolipid biosynthesis; lipid IV(A) biosynthesis; lipid IV(A) from (3R)-3-hydroxytetradecanoyl-[acyl-carrier-protein] and UDP-N-acetyl-alpha-D-glucosamine: step 4/6. Functionally, hydrolyzes the pyrophosphate bond of UDP-2,3-diacylglucosamine to yield 2,3-diacylglucosamine 1-phosphate (lipid X) and UMP by catalyzing the attack of water at the alpha-P atom. Involved in the biosynthesis of lipid A, a phosphorylated glycolipid that anchors the lipopolysaccharide to the outer membrane of the cell. This chain is UDP-2,3-diacylglucosamine hydrolase, found in Xanthomonas campestris pv. campestris (strain 8004).